The primary structure comprises 154 residues: Transcriptional repressor NrdR (154 aa).

Residues 3 to 34 fold into a zinc finger; sequence CPFCGANDTKVIDSRLVAEGEQVRRRRECVAC. The 91-residue stretch at 49 to 139 folds into the ATP-cone domain; sequence PRLIKQDGTR…VYRRFQDLDE (91 aa).

This sequence belongs to the NrdR family. The cofactor is Zn(2+).

Negatively regulates transcription of bacterial ribonucleotide reductase nrd genes and operons by binding to NrdR-boxes. The chain is Transcriptional repressor NrdR from Pseudomonas entomophila (strain L48).